Consider the following 353-residue polypeptide: Aliphatic aldoxime dehydratase (353 aa).

Position 219 (S219) interacts with an aliphatic aldoxime. H299 serves as a coordination point for heme b. Residue H320 participates in an aliphatic aldoxime binding. Residue H320 is part of the active site.

It belongs to the heme-containing dehydratase family. Homodimer. Heme b is required as a cofactor.

It catalyses the reaction an aliphatic aldoxime = a nitrile + H2O. Active when the heme iron is in the ferrous state. Activated by FMN, Fe(2+), Sn(2+), Na(2)SO(3), Na(2)S and vitamin K3. Its function is as follows. Catalyzes the dehydration of aldoximes to their corresponding nitrile. Is active toward various arylalkyl- and alkyl-aldoximes, and to a lesser extent toward aryl-aldoximes. In Rhodococcus globerulus, this protein is Aliphatic aldoxime dehydratase.